The sequence spans 241 residues: Hydantoin racemase (241 aa).

This sequence belongs to the HyuE racemase family. In terms of assembly, homotetramer.

It catalyses the reaction a D-5-monosubstituted hydantoin = a L-5-monosubstituted hydantoin. The enzyme catalyses D-5-benzylhydantoin = L-5-benzylhydantoin. It carries out the reaction D-5-isobutylhydantoin = L-5-isobutylhydantoin. Its activity is regulated as follows. Inhibited by Cu(2+), Hg(2+), Pb(2+) and Zn(2+). The activity is twofold lower in the presence of Mn(2+), Co(2+) and Ni(2+). The insignificant effect of the metal chelating agent EDTA on the hydantoin racemase activity would indicate that it is not a metalloenzyme. May be involved in the asymmetric conversion of racemic 5-substituted hydantoins to the corresponding L-amino acids. Catalyzes the racemization via enolization of D- and L-5-monosubstituted hydantoins. This is Hydantoin racemase from Rhizobium meliloti (Ensifer meliloti).